A 315-amino-acid polypeptide reads, in one-letter code: uncharacterized protein (315 aa).

Belongs to the carbohydrate kinase PfkB family.

This is an uncharacterized protein from Escherichia coli (strain K12).